The following is a 628-amino-acid chain: (+)-alpha pinene synthase 1, chloroplastic (628 aa).

Mg(2+)-binding residues include Asp-379, Asp-383, and Asp-531. Positions 379–383 (DDIYD) match the DDXXD motif motif.

This sequence belongs to the terpene synthase family. Tpsd subfamily. Requires Mg(2+) as cofactor. It depends on Mn(2+) as a cofactor.

The protein resides in the plastid. It is found in the chloroplast. The catalysed reaction is (2E)-geranyl diphosphate = (1R,5R)-alpha-pinene + diphosphate. It participates in terpene metabolism; oleoresin biosynthesis. The protein operates within secondary metabolite biosynthesis; terpenoid biosynthesis. Monoterpene synthase (TPS) involved in the biosynthesis of monoterpene natural products included in conifer oleoresin secretions and volatile emissions; these compounds contribute to biotic and abiotic stress defense against herbivores and pathogens. Catalyzes the conversion of (2E)-geranyl diphosphate (GPP) to (+)-alpha-pinene. This is (+)-alpha pinene synthase 1, chloroplastic from Pinus contorta (Shore pine).